The primary structure comprises 279 residues: Thymidylate synthase (279 aa).

133 to 134 lines the dUMP pocket; it reads RR. Cys-154 acts as the Nucleophile in catalysis. Residues 178–181, Asn-189, and 219–221 contribute to the dUMP site; these read RSND and HIY. Asp-181 is a (6R)-5,10-methylene-5,6,7,8-tetrahydrofolate binding site. Ala-278 provides a ligand contact to (6R)-5,10-methylene-5,6,7,8-tetrahydrofolate.

The protein belongs to the thymidylate synthase family. Bacterial-type ThyA subfamily. As to quaternary structure, homodimer.

The protein resides in the cytoplasm. The catalysed reaction is dUMP + (6R)-5,10-methylene-5,6,7,8-tetrahydrofolate = 7,8-dihydrofolate + dTMP. The protein operates within pyrimidine metabolism; dTTP biosynthesis. Functionally, catalyzes the reductive methylation of 2'-deoxyuridine-5'-monophosphate (dUMP) to 2'-deoxythymidine-5'-monophosphate (dTMP) while utilizing 5,10-methylenetetrahydrofolate (mTHF) as the methyl donor and reductant in the reaction, yielding dihydrofolate (DHF) as a by-product. This enzymatic reaction provides an intracellular de novo source of dTMP, an essential precursor for DNA biosynthesis. The sequence is that of Thymidylate synthase from Streptococcus suis (strain 05ZYH33).